Reading from the N-terminus, the 13477-residue chain is Mucin-3B (13477 aa).

A signal peptide spans 1 to 21; it reads MQLLGLLSILWMLKSSPGATG. Residues 219–234 show a composition bias toward low complexity; it reads TISSTTRTTERTPLPT. Disordered regions lie at residues 219-243, 327-347, 360-383, 513-559, 622-643, 815-839, 923-968, 1154-1179, 1480-1511, 1529-1601, 1619-1638, 1692-1714, 1944-1968, 2064-2123, 2170-2197, 2275-2308, 2442-2462, 2476-2497, 2509-2537, 2591-2610, 2672-2717, 2812-2832, 2845-2867, 2922-2947, 3074-3109, 3309-3395, 3420-3481, 3545-3565, 3654-3727, 3740-3812, 4014-4047, 4067-4106, 4182-4249, 4269-4313, 4510-4530, 4557-4617, 4630-4651, 4802-4830, 4953-4986, 5128-5203, 5455-5486, 5627-5680, 5834-5908, 5957-5977, 5990-6017, 6030-6080, 6120-6150, 6172-6197, 6456-6481, 6541-6598, 6846-6867, 6946-6971, 6999-7021, 7067-7093, 7170-7206, 7225-7244, 7299-7329, 7400-7433, 7476-7532, 7578-7600, 7731-7766, 7922-7996, 8036-8066, 8088-8113, 8372-8397, 8457-8514, 8762-8783, 8862-8887, 8915-8941, 8983-9009, 9052-9122, 9141-9160, 9215-9240, 9335-9366, 9409-9465, 9566-9589, 9612-9674, 9734-9760, 9828-9859, 9883-9908, 9921-9973, 10076-10099, 10120-10166, 10189-10285, 10389-10425, 10462-10481, 10501-10537, 10640-10660, 10750-10828, 10887-11032, 11044-11065, 11276-11317, 11446-11482, 11566-11697, 11754-11779, 11818-11949, 12067-12103, 12186-12220, 12280-12323, 12364-12452, 12468-12578, 12616-12639, 12681-12700, 12785-12805, 12985-13011, and 13052-13086; these read TISSTTRTTERTPLPTGSIHTTMSP, TRSTPTSETTYPASPTSTVTD, GTLSPTTTLPPTSSSQQTTETPMT, SMTT…PSTL, ATTPTTNLGNTTTETTSHSTPS, TTTNSFTTSANMEPPSTAVATTGTG, TSQT…STTE, PSMSASNDRTTHTESISSPPASTSTL, SPTVQNTETSSFVSMTSATTPSERPTFTSTEN, SISA…FPET, MTSTPPITSSVTPTNTVTSM, TTSTPTSETTYSTSPTSTVTDSM, TTSATMEPPSSSVAATDTGQTTFTS, TPNA…IAKS, STSMTPSTVSTSIPTSQPKTVNSSSGGI, SSSMSESSAGTTHTESISSPPATTSTLHTTAEST, RSTPTSETTYPTSPTSTVKGS, LSMETSLPPTSSSLPTTETATT, SHSTPSFSSSTIHSTVSTPTTVISSGPPT, SAMSTSDIPSSPSIQNTETS, TSTL…FSSS, TTITRSTPTSETTYPISSTST, TMTETSSSATSLPLTSPLVSTTE, SRIPSSLSTDIPTSQPTTITPSSVGI, ETPSSTVATTGTGQTTFTSSTATSPETNTLTPTPDI, TTSH…NSNS, ITTT…SHST, STTSFTSSTATTETTSRSTPS, SITT…STTA, ITTI…TTAE, TETTSRSTPSYTSAITTTETTSHRTPSFTSSIAT, TSNSTASLTSSMTTTETTSHSTPSLTSSMTATETTSHSTP, TTET…SSIT, NSTS…PSFT, SHSTPSFNSSITTTETLSHST, TETT…STSS, YSPSSFTSSITTTESPSHSTPS, TSSFTSSITSTETTSHSTPSLTSSITATG, HSLPSFTSSSTTTETPSHSPPGFSSSIATSKTIS, YTSS…ITTT, ITNTESTSRSTPSFTFSTTSTETTSHSTPSFT, TTKT…ATSK, TTSY…HSPP, STPSFTSSITTTETTSQSSPS, HSTASFTSSITTTETTSHSTRSITSSIT, TSSI…PPIF, TTETNSHSPPSFTSSIATTETPSHSPPSFTS, TESTSHSTPSFTSSIATTETTSHTPP, TETPSHSTPSFPSSITTTQSASHSTP, TKTT…TSTS, TTGTSSHNTLGLSSSVDTTKTT, ITTTETTSHSTPSITSSVTTAERTSH, TTESTSHSNPSLTSAITTTETRS, TTETTSHSPPSFTSSISITETPSHSPP, TETASHSNPSSTSSITTTESTSHSPPRSTSAIATTGI, SHSTASFTSSITSTETISHS, FTSSITTTESTSQSTPSFTFSTTSTETTSHS, SYTSSITTTETPSHSSPSFPSTITSTETISHRTP, TETI…TTST, TGTSSHSTLGLSSSVTTTKTTSH, TEITSHSPPSFTSSSTTTETPSHSTPGFSSSIATSK, SHST…PPIF, TTESTSHSNPSLTSAITTTETRSHSPP, AETT…TTGI, FTSSITTTESTSQSTPSFTFSTTSTE, TSSITTTETPSHSSPSFPSSITSTETISHRTP, SHSTPSFTSSITTTKSTSHSNPSL, TTET…PPSF, TTSHGTPSLTSLIATTKSTPQNPSSFT, TSSITTTETTSHSTPRITSSITTTEKTSHSTP, TTTESTSHSNPSLTSAITNTETRSHS, TTSH…SKTI, SDSTPSFTSSVTTTETTSQSSPSF, ITTT…TVPS, ITTE…SPLS, TSSIATSETPSHSTPSFPSSITTTQSISHSTPSLSSA, TTKTTSHSPPSFTASITSTK, SHSSPSFTSSSTTTEIPSHSTPGFSSSIATSKTTSTS, TTSFPSSITTTETTSHSTPSF, TTTE…QRSP, TTET…SPSS, SHSTPSFTSSITSPETISHSTP, TGTE…SPSH, STTATPPDSTPSFTSSIATTENTSHSTPSFTSSITTT, TTET…PGFS, TKTTSHSTPDFTSSIASTKTTSHSTP, SIAT…HSPP, TSSFTSSITTTETTSQSTPSFTSSIAVTETPSDSTPV, PSYTSSIITTKTPSHSTPSFPSSITTTETISHSTP, TETT…STPI, TTET…TTET, EMTS…NTPS, FTTAETGVTSTPSSPSSLSTDIPT, SSPSIQSTETSSLVGTTSPT, IPSTHSSTLQTTPSIPSLQTS, TSSMTPESESSIIPNASSSTGTGTVPT, and SLPTILRTSSKSTHPSPPTARTSETSVATTQTPTT. Composition is skewed to low complexity over residues 513-538 and 547-559; these read SMTTTASGPTTTNTLSSLTSSILSST and TSHTTTTTPPSTL. Positions 1620–1638 are enriched in low complexity; sequence TSTPPITSSVTPTNTVTSM. Over residues 1944-1956 the composition is skewed to polar residues; that stretch reads TTSATMEPPSSSV. Positions 1957–1968 are enriched in low complexity; that stretch reads AATDTGQTTFTS. Residues 2066-2091 are compositionally biased toward polar residues; sequence NASSMTTSETTYPNSPTGPVTNSMSK. Positions 2096–2107 are enriched in low complexity; it reads ASMTQTSSTATS. Residues 2113 to 2123 show a composition bias toward polar residues; it reads PSGSTTEIAKS. A compositionally biased stretch (low complexity) spans 2170–2185; it reads STSMTPSTVSTSIPTS. Residues 2186-2195 show a composition bias toward polar residues; it reads QPKTVNSSSG. Low complexity-rich tracts occupy residues 2292–2308 and 2442–2458; these read SSPPATTSTLHTTAEST and RSTPTSETTYPTSPTST. The span at 2591–2603 shows a compositional bias: low complexity; sequence SAMSTSDIPSSPS. 2 stretches are compositionally biased toward low complexity: residues 2929 to 2944 and 3074 to 3097; these read STDIPTSQPTTITPSS and ETPSSTVATTGTGQTTFTSSTATS. Over residues 3098 to 3109 the composition is skewed to polar residues; that stretch reads PETNTLTPTPDI. A compositionally biased stretch (low complexity) spans 3309–3359; the sequence is TTSHSTPSFTSPIATTKTSSHSSPSFTSSIATLETTSHSTPSFTSSITTNS. Over residues 3360-3370 the composition is skewed to polar residues; the sequence is HSTPRFSSSIA. Residues 3371 to 3385 show a composition bias toward low complexity; that stretch reads TRETTSHSTSSFTPS. Positions 3386–3395 are enriched in polar residues; the sequence is IATTKTNSNS. Over residues 3420 to 3452 the composition is skewed to low complexity; that stretch reads ITTTETTSHSTPSFTSSMATTKTTSHSTPSFTS. The segment covering 3453–3462 has biased composition (polar residues); that stretch reads PIATRETTSH. A compositionally biased stretch (low complexity) spans 3463–3481; it reads STPSFTSLITTTKTTSHST. Residues 3740–3749 show a composition bias toward polar residues; that stretch reads ITTIETPSHG. Positions 3750–3785 are enriched in low complexity; it reads TPSFTSSITSTETTSHSSPSFISSITTTEITSHSTP. Over residues 3786 to 3812 the composition is skewed to polar residues; sequence RFTSSITTMETPSHSTPNFTSSITTAE. 2 stretches are compositionally biased toward low complexity: residues 4020–4042 and 4067–4096; these read STPSYTSAITTTETTSHRTPSFT and TSNSTASLTSSMTTTETTSHSTPSLTSSMT. Over residues 4097–4106 the composition is skewed to polar residues; it reads ATETTSHSTP. Low complexity-rich tracts occupy residues 4182–4228 and 4237–4249; these read TTET…PSFT and TSHSTPSFTSSIT. Positions 4557 to 4574 are enriched in low complexity; that stretch reads TETTSNSSPSFTSSITNT. Positions 4575–4601 are enriched in polar residues; it reads KTTSYSPPGFTSSIPATETTSRSPPGF. Residues 4602-4617 show a composition bias toward low complexity; sequence TSSITTTETTSHSTSS. Residues 4802–4827 show a composition bias toward low complexity; that stretch reads TSSFTSSITSTETTSHSTPSLTSSIT. Over residues 5137-5158 the composition is skewed to low complexity; the sequence is TPSHITPSFTSTITTSESTSHS. Polar residues predominate over residues 5159-5170; that stretch reads NPSLTSAITTTE. Low complexity-rich tracts occupy residues 5174 to 5203 and 5458 to 5486; these read HSPPIFTSSITTTETTSHNTPSFTSSITTT and TESTSRSTPSFTFSTTSTETTSHSTPSFT. Low complexity predominate over residues 5834–5858; that stretch reads TTSYSTPSITSSITTTERTSHSTPS. Residues 5859-5874 show a composition bias toward polar residues; it reads YTSSIATRETPSHTVP. Positions 5875 to 5889 are enriched in low complexity; sequence SFTSSITTTESTSHS. The span at 5890–5901 shows a compositional bias: polar residues; sequence NPSLTSAITTTE. A compositionally biased stretch (low complexity) spans 6045 to 6059; it reads SFTSSITTTDSTSHS. The span at 6060–6071 shows a compositional bias: polar residues; that stretch reads NPSLTSAITTTE. Residues 6172 to 6185 show a composition bias toward low complexity; the sequence is TESTSHSTPSFTSS. Residues 6186 to 6197 are compositionally biased toward polar residues; sequence IATTETTSHTPP. A compositionally biased stretch (low complexity) spans 6456–6475; the sequence is TETPSHSTPSFPSSITTTQS. A compositionally biased stretch (polar residues) spans 6852 to 6867; the sequence is HNTLGLSSSVDTTKTT. The segment covering 6946-6965 has biased composition (low complexity); the sequence is ITTTETTSHSTPSITSSVTT. Over residues 6999 to 7018 the composition is skewed to polar residues; the sequence is TTESTSHSNPSLTSAITTTE. Over residues 7172-7206 the composition is skewed to low complexity; it reads TASHSNPSSTSSITTTESTSHSPPRSTSAIATTGI. Low complexity-rich tracts occupy residues 7300-7329 and 7400-7427; these read TSSITTTESTSQSTPSFTFSTTSTETTSHS and SYTSSITTTETPSHSSPSFPSTITSTET. Over residues 7476-7491 the composition is skewed to polar residues; that stretch reads TETISHSPPSFTSLTN. The segment covering 7492–7532 has biased composition (low complexity); it reads STETTSHSPPSFTSSSTTTETPSHSTPGFSSSIATSKTTST. Composition is skewed to low complexity over residues 7734–7766 and 7922–7944; these read TSHSPPSFTSSSTTTETPSHSTPGFSSSIATSK and SHSTRSITSSITTTKRTSHSTPS. The segment covering 7945-7987 has biased composition (polar residues); that stretch reads YTSSIATSETPSHTVPSFTSLITTTDSTSHSNPSLTSAITTTE. The span at 8088-8101 shows a compositional bias: low complexity; that stretch reads TESTSHSTPSFTSS. Residues 8102 to 8113 are compositionally biased toward polar residues; the sequence is IATTETTSHTPP. Positions 8372–8391 are enriched in low complexity; the sequence is TETPSHSTPSFPSSITTTQS. Polar residues predominate over residues 8768-8783; the sequence is HNTLGLSSSVDTTKTT. Low complexity predominate over residues 8862-8881; that stretch reads ITTTETTSHSTPSITSSVTT. Residues 8915-8934 are compositionally biased toward polar residues; the sequence is TTESTSHSNPSLTSAITTTE. Low complexity-rich tracts occupy residues 9067-9081 and 9088-9122; these read PTTETTSHSPPSFTS and TASHSNPSSTSSITTTESTSHSPPRSTSAIATTGI. Over residues 9335-9360 the composition is skewed to low complexity; sequence TSSITTTETPSHSSPSFPSSITSTET. Over residues 9409–9424 the composition is skewed to polar residues; the sequence is TETISHSPPSFTSLTN. Low complexity-rich tracts occupy residues 9425–9465, 9566–9585, and 9612–9624; these read STET…TTST, SHSTPSFTSSITTTKSTSHS, and TTETTSHRTPSFT. Residues 9625 to 9661 show a composition bias toward polar residues; the sequence is SSIATAETTSHSPPSFTSLITTSETPSHSNPSFTSLI. The span at 9662 to 9674 shows a compositional bias: low complexity; the sequence is TTTESTSHSPPSF. Polar residues-rich tracts occupy residues 9892–9903 and 9921–9933; these read NPSLTSAITNTE and TTSHSPPSFTSLI. The span at 9934-9973 shows a compositional bias: low complexity; sequence TSTETTSHSPPSFTSSSTTTETPSHSTPGFSSSIATSKTI. A compositionally biased stretch (low complexity) spans 10120–10130; the sequence is ITTTETTSHST. The segment covering 10131–10166 has biased composition (polar residues); sequence PNITSSVTTTERTSHSTPSYTSSIATGETPSHTVPS. Composition is skewed to low complexity over residues 10196-10271 and 10394-10421; these read HSPP…SFTS and TSETPSHSTPSFPSSITTTQSISHSTPS. The segment covering 10750-10791 has biased composition (polar residues); that stretch reads TTTETTSHSPPRFTSSITTTKTPSDSTPVFTPSIATSETSSH. Composition is skewed to low complexity over residues 10792 to 10828, 10887 to 10937, and 10950 to 11032; these read STPGYTSSTATTETMSHSTSSFTSSITTTETTSQRSP, TTET…SSIT, and PSSI…SPSS. A compositionally biased stretch (low complexity) spans 11278 to 11291; it reads TETTSHSPPHFTSS. Over residues 11292–11317 the composition is skewed to polar residues; that stretch reads ITRTKTTSHRPPTFTSSITTTESPSH. Positions 11566–11682 are enriched in low complexity; that stretch reads TTETTSHSIP…SHSTSGFTSS (117 aa). Polar residues-rich tracts occupy residues 11683-11697 and 11754-11769; these read NATTETTSHSTPGFS and TKTTSHSTPDFTSSIA. Composition is skewed to low complexity over residues 11770–11779 and 11818–11880; these read STKTTSHSTP and SIAT…SHST. Composition is skewed to polar residues over residues 11881–11896 and 11903–11912; these read PSFTSSIATIETTSHS and LIPTTKTTLH. 2 stretches are compositionally biased toward low complexity: residues 11913-11949 and 12067-12091; these read SPPSFTSSITTTKTTSHSTSSLTSSMPTTKTTSHSPP and TSSFTSSITTTETTSQSTPSFTSSI. Over residues 12092–12103 the composition is skewed to polar residues; the sequence is AVTETPSDSTPV. The span at 12280–12309 shows a compositional bias: low complexity; sequence TETTSHSAPNFSSSITSTETTSHSTPSFTS. Residues 12310 to 12323 show a composition bias toward polar residues; sequence AITSTETTSHSTPI. Residues 12364 to 12412 are compositionally biased toward low complexity; that stretch reads TTETTSHSTPGFASSITTTKTTSHSTPSFTSSIATSNTTSSSTPGFTSS. A compositionally biased stretch (polar residues) spans 12413 to 12439; it reads IATTETTSRSTPGFTSSIVTTETTSPH. A compositionally biased stretch (low complexity) spans 12440–12452; the sequence is TPGFTSSITTTET. Polar residues predominate over residues 12468-12477; it reads EMTSHSTPSL. Composition is skewed to low complexity over residues 12478-12569, 12624-12639, 12681-12692, 12794-12805, 12990-13003, and 13073-13086; these read TFSI…VTTP, TSTPSSPSSLSTDIPT, SSPSIQSTETSS, QTTPSIPSLQTS, PESESSIIPNASSS, and TSETSVATTQTPTT. Positions 13130–13163 constitute an EGF-like domain; the sequence is SGDRCQLQTRCQNGGQWDGLKCQCPSTFYGSSCE. Intrachain disulfides connect cysteine 13134–cysteine 13140 and cysteine 13153–cysteine 13162. Positions 13172–13297 constitute an SEA domain; sequence DVVETEVGME…DSIKVNNNSK (126 aa). A helical membrane pass occupies residues 13381 to 13401; the sequence is LVGGLTAGAALLVLLLLALGV.

Highly O-glycosylated and probably also N-glycosylated. In terms of tissue distribution, fetal and adult small intestine and fetal and adult colon.

Its subcellular location is the membrane. Major glycoprotein component of a variety of mucus gels. Thought to provide a protective, lubricating barrier against particles and infectious agents at mucosal surfaces. This is Mucin-3B from Homo sapiens (Human).